The chain runs to 326 residues: Zinc transporter 11 (326 aa).

A signal peptide spans 1–20; it reads MSRSLVFFFLFLVLVVPCLS. Topologically, residues 21–49 are extracellular; the sequence is HGTGGDHDDDEASHVKSSDLKSKSLISVK. The helical transmembrane segment at 50-70 threads the bilayer; it reads IACLVIIFVLTFISGVSPYFL. Residues 71–75 are Cytoplasmic-facing; sequence KWSQG. Residues 76-96 form a helical membrane-spanning segment; the sequence is FLVLGTQFAGGVFLATALMHF. Topologically, residues 97 to 121 are extracellular; the sequence is LSDADETFRGLLTAEGESEPSPAYP. The helical transmembrane segment at 122 to 142 threads the bilayer; the sequence is FAYMLACAGFMLTMLADSVIA. Residues 143-174 are Cytoplasmic-facing; sequence HIYSKTQNDLELQGEDKSNQRSATTETSIGDS. Residues 175–195 form a helical membrane-spanning segment; it reads ILLIVALCFHSVFEGIAIGIS. Over 196 to 203 the chain is Extracellular; the sequence is ETKSDAWR. A helical membrane pass occupies residues 204–224; that stretch reads ALWTITLHKIFAAIAMGIALL. At 225-235 the chain is on the cytoplasmic side; sequence RMIPDRPLFSS. Residues 236 to 256 form a helical membrane-spanning segment; it reads ITYSFAFAISSPIGVAIGIVI. The Extracellular portion of the chain corresponds to 257-262; it reads DATTQG. A helical membrane pass occupies residues 263 to 283; it reads SIADWIFALSMSLACGVFVYV. Topologically, residues 284 to 305 are cytoplasmic; that stretch reads SVNHLLAKGYRPNKKVHVDEPR. The helical transmembrane segment at 306–326 threads the bilayer; it reads YKFLAVLFGVVVIAIVMIWDT.

The protein belongs to the ZIP transporter (TC 2.A.5) family.

The protein localises to the cell membrane. Its function is as follows. Probably mediates zinc uptake from the rhizosphere. This Arabidopsis thaliana (Mouse-ear cress) protein is Zinc transporter 11 (ZIP11).